The sequence spans 408 residues: CinA-like protein (408 aa).

This sequence belongs to the CinA family.

The protein is CinA-like protein of Thermotoga neapolitana (strain ATCC 49049 / DSM 4359 / NBRC 107923 / NS-E).